Consider the following 407-residue polypeptide: Indoleamine 2,3-dioxygenase 1 (407 aa).

A heme b-binding site is contributed by H350. Residues 362–388 form a disordered region; the sequence is SKQKPMGGHKSEEPSNTENRGTGGTDV.

Belongs to the indoleamine 2,3-dioxygenase family. In terms of assembly, monomer. Requires heme b as cofactor.

It is found in the cytoplasm. It localises to the cytosol. The catalysed reaction is D-tryptophan + O2 = N-formyl-D-kynurenine. It carries out the reaction L-tryptophan + O2 = N-formyl-L-kynurenine. Activity is inhibited by and MTH-trp (methylthiohydantoin-DL-tryptophan), modestly inhibited by L-1MT (1-methyl-L-tryptophan) but not D-1MT (1-methyl-D-tryptophan). In terms of biological role, catalyzes the first and rate limiting step of the catabolism of the essential amino acid tryptophan along the kynurenine pathway. Involved in the peripheral immune tolerance, contributing to maintain homeostasis by preventing autoimmunity or immunopathology that would result from uncontrolled and overreacting immune responses. Tryptophan shortage inhibits T lymphocytes division and accumulation of tryptophan catabolites induces T-cell apoptosis and differentiation of regulatory T-cells. Acts as a suppressor of anti-tumor immunity. Limits the growth of intracellular pathogens by depriving tryptophan. Protects the fetus from maternal immune rejection. The sequence is that of Indoleamine 2,3-dioxygenase 1 from Rattus norvegicus (Rat).